A 182-amino-acid polypeptide reads, in one-letter code: Large ribosomal subunit protein uL5 (182 aa).

This sequence belongs to the universal ribosomal protein uL5 family. In terms of assembly, part of the 50S ribosomal subunit; part of the 5S rRNA/L5/L18/L25 subcomplex. Contacts the 5S rRNA and the P site tRNA. Forms a bridge to the 30S subunit in the 70S ribosome.

Its function is as follows. This is one of the proteins that bind and probably mediate the attachment of the 5S RNA into the large ribosomal subunit, where it forms part of the central protuberance. In the 70S ribosome it contacts protein S13 of the 30S subunit (bridge B1b), connecting the 2 subunits; this bridge is implicated in subunit movement. Contacts the P site tRNA; the 5S rRNA and some of its associated proteins might help stabilize positioning of ribosome-bound tRNAs. This Borreliella afzelii (strain PKo) (Borrelia afzelii) protein is Large ribosomal subunit protein uL5.